Here is a 91-residue protein sequence, read N- to C-terminus: YcgL domain-containing protein ESA_01460 (91 aa).

Residues 1–85 (MFCVIYRSAR…PPENLLKQHL (85 aa)) enclose the YcgL domain.

This Cronobacter sakazakii (strain ATCC BAA-894) (Enterobacter sakazakii) protein is YcgL domain-containing protein ESA_01460.